The following is a 1153-amino-acid chain: ATP-dependent helicase/deoxyribonuclease subunit B (1153 aa).

Glycine 8–serine 15 serves as a coordination point for ATP. Positions 786, 1104, 1107, and 1113 each coordinate [4Fe-4S] cluster.

The protein belongs to the helicase family. AddB/RexB type 1 subfamily. Heterodimer of AddA and AddB. It depends on Mg(2+) as a cofactor. [4Fe-4S] cluster serves as cofactor.

The heterodimer acts as both an ATP-dependent DNA helicase and an ATP-dependent, dual-direction single-stranded exonuclease. Recognizes the chi site generating a DNA molecule suitable for the initiation of homologous recombination. The AddB subunit has 5' -&gt; 3' nuclease activity but not helicase activity. In Clostridium acetobutylicum (strain ATCC 824 / DSM 792 / JCM 1419 / IAM 19013 / LMG 5710 / NBRC 13948 / NRRL B-527 / VKM B-1787 / 2291 / W), this protein is ATP-dependent helicase/deoxyribonuclease subunit B.